A 382-amino-acid polypeptide reads, in one-letter code: p21-activated protein kinase-interacting protein 1 (382 aa).

WD repeat units lie at residues 37–77 (THHS…EHGA), 80–120 (HHAG…KTFK), 122–160 (HRGH…SAFI), 202–240 (TNGK…CLCE), and 243–284 (AHEN…KVPP). The tract at residues 313–382 (LPPAAEPCPD…MSEKKRKKKM (70 aa)) is disordered. Positions 352–363 (DSKQPTKGNSPV) are enriched in polar residues. The segment covering 365-382 (AKKRKMATMSEKKRKKKM) has biased composition (basic residues).

In terms of assembly, interacts with PAK1.

The protein localises to the nucleus. The protein resides in the nucleolus. Negatively regulates the PAK1 kinase. PAK1 is a member of the PAK kinase family, which has been shown to play a positive role in the regulation of signaling pathways involving MAPK8 and RELA. PAK1 exists as an inactive homodimer, which is activated by binding of small GTPases such as CDC42 to an N-terminal regulatory domain. PAK1IP1 also binds to the N-terminus of PAK1, and inhibits the specific activation of PAK1 by CDC42. May be involved in ribosomal large subunit assembly. The protein is p21-activated protein kinase-interacting protein 1 (Pak1ip1) of Mus musculus (Mouse).